The primary structure comprises 760 residues: MIMNMTTDYRDPLLDLFGTESNSGNETSSPSDIPVINRSGTFNQQQFSPLLTQQSLYNTPNSGSTPNIFDPNYTQMQEEQTSPSSNKLQPEDPPRKKRNTRSQTKIHQQSEGDEYNSNDYKDSIDLDKPPVVEPSPPFFVESDTTPEFVIPTPTSEQQQQQHHELIAQDYQRSNNSNQFGNLTHYEPNLPPLPPLSESILPQTNTFHPLVLPHDPRHAITAGPANNSQQQQQQQQQDSSIPSDGISSKIQQLHAPSLSNNQSASQRKKKESSGPKTRPAFVMKIWSMVNDPANHEYIRWNDDGKTFQVFHREDFMKVILPKYFKHNNFASFVRQLNMYGWHKVQDVANGTLNQNSDKNGQDEIWQFENPNFIKDREDLLDKIVRNKSSSNQDDVSGVSFNGINNSANLSLILQELETIKMNQYVISEDLRRVRQDNKMLWQENYLNRERNQVQGRTLDKILKFLSVVYGNNANKILNGHGFADFNDSNNIMTQYRPSPMGSPLLSRPQTQPPPSNSRFARDNNQTAQPTYESPLSTSDTNNNNNNTFEYQQAVNRPRLMLTNRAHSRRPSMSRTKSTPEGSIEEIIRSYSNDKAAESNVNRMYEQLVGHQPGATTNNNNHSSSTAISAPSPRHSFLQELNLPGTPRNLDDLEKHINKEGQSIQQVQDWIDKLAQEQHEKQQQQQGNDDDDDFDVNEFLKDATTTPSSNVPNGGHYNNGNISFVGSPIAMTPGSNVSSNINDSDGNEKKSKKRSIEEVSDH.

Disordered regions lie at residues 1–132 (MIMN…PPVV) and 206–276 (FHPL…GPKT). Composition is skewed to polar residues over residues 19–31 (TESN…SSPS) and 38–88 (RSGT…SNKL). The segment covering 119–130 (DYKDSIDLDKPP) has biased composition (basic and acidic residues). Over residues 221–247 (AGPANNSQQQQQQQQQDSSIPSDGISS) the composition is skewed to low complexity. The DNA-binding element occupies 276–385 (TRPAFVMKIW…EDLLDKIVRN (110 aa)). The involved in trimerization stretch occupies residues 414–467 (ELETIKMNQYVISEDLRRVRQDNKMLWQENYLNRERNQVQGRTLDKILKFLSVV). Disordered regions lie at residues 492-545 (TQYR…NNNN), 560-582 (LTNR…EGSI), 609-630 (HQPG…SAPS), and 674-760 (QEQH…VSDH). The span at 515-539 (NSRFARDNNQTAQPTYESPLSTSDT) shows a compositional bias: polar residues. Ser-570 is subject to Phosphoserine. Thr-574 bears the Phosphothreonine mark. A Phosphoserine modification is found at Ser-576. Residue Thr-577 is modified to Phosphothreonine. A compositionally biased stretch (low complexity) spans 613 to 628 (ATTNNNNHSSSTAISA). Residues 646-684 (RNLDDLEKHINKEGQSIQQVQDWIDKLAQEQHEKQQQQQ) are a coiled coil. Polar residues-rich tracts occupy residues 701 to 722 (ATTT…NISF) and 731 to 742 (PGSNVSSNINDS). The span at 744-760 (GNEKKSKKRSIEEVSDH) shows a compositional bias: basic and acidic residues.

This sequence belongs to the HSF family. Homotrimer. Homotrimerization increases the affinity of HSF1 to DNA. Interacts with HSP90. In terms of processing, activated by phosphorylation of at least Ser-570, Thr-574, Ser-576 and Thr-577 in response to heat shock. Additional unidentified residues are also phosphorylated in response to heat shock.

The protein resides in the nucleus. Functionally, DNA-binding transcription factor that specifically binds heat shock promoter elements (HSE) and activates transcription. With HSP90, is required for the modulation of the chaperone levels in response to growth temperature, rather than the activation of acute responses to sudden thermal transitions. Activated during infection and contributes to full virulence. The chain is Heat shock transcription factor from Candida albicans (strain SC5314 / ATCC MYA-2876) (Yeast).